The primary structure comprises 140 residues: Histone H2B (140 aa).

The span at 1–10 (MPPKAAEKKP) shows a compositional bias: basic and acidic residues. The disordered stretch occupies residues 1 to 48 (MPPKAAEKKPTTGGKAPAGKAPAEKKEAGKKTAAAASGDKKKRGKTRK). Residues K8 and K9 each carry the N6-acetyllysine; alternate modification. Residues K8 and K9 each participate in a glycyl lysine isopeptide (Lys-Gly) (interchain with G-Cter in SUMO); alternate cross-link. The span at 11-21 (TTGGKAPAGKA) shows a compositional bias: low complexity. K15 carries the N6-acetyllysine modification. K25 is subject to N6-acetyllysine; alternate. K25 is covalently cross-linked (Glycyl lysine isopeptide (Lys-Gly) (interchain with G-Cter in SUMO); alternate). Residue K26 forms a Glycyl lysine isopeptide (Lys-Gly) (interchain with G-Cter in SUMO) linkage. A Glycyl lysine isopeptide (Lys-Gly) (interchain with G-Cter in ubiquitin) cross-link involves residue K134.

The protein belongs to the histone H2B family. As to quaternary structure, the nucleosome is a histone octamer containing two molecules each of H2A, H2B, H3 and H4 assembled in one H3-H4 heterotetramer and two H2A-H2B heterodimers. The octamer wraps approximately 147 bp of DNA. In terms of processing, monoubiquitinated by the ubc2-bre1 complex to form H2BK123ub1. H2BK123ub1 gives a specific tag for epigenetic transcriptional activation and is also prerequisite for H3K4me and H3K79me formation. H2BK123ub1 also modulates the formation of double-strand breaks during meiosis and is a prerequisite for DNA-damage checkpoint activation. Post-translationally, acetylated by gcn5 to form H2BK11ac and H2BK16ac. H2BK16ac can also be formed by esa1. Acetylation of N-terminal lysines and particularly formation of H2BK11acK16ac has a positive effect on transcription. Sumoylation to form H2BK6su or H2BK7su, and probably also H2BK16su or H2BK17su, occurs preferentially near the telomeres and represses gene transcription.

It localises to the nucleus. Its subcellular location is the chromosome. Core component of nucleosome. Nucleosomes wrap and compact DNA into chromatin, limiting DNA accessibility to the cellular machineries which require DNA as a template. Histones thereby play a central role in transcription regulation, DNA repair, DNA replication and chromosomal stability. DNA accessibility is regulated via a complex set of post-translational modifications of histones, also called histone code, and nucleosome remodeling. The sequence is that of Histone H2B (htb1) from Aspergillus terreus (strain NIH 2624 / FGSC A1156).